Reading from the N-terminus, the 432-residue chain is MTLTLNRQLLTSRQILVAFSGGLDSTVLLHQLVQWRTENPGVTLRAIHVHHGLSANADAWVTHCENVCQQWQVPLVVERVQLAQEGLGIEAQARQARYQAFARTLLPGEVLVTAQHLDDQCETFLLALKRGSGPAGLSAMAEVSEFAGTRLIRPLLARTRGELEQWALAHGLRWIEDESNQDDSYDRNFLRLRVVPLLQQRWPHFAEATARSATLCAEQESLLDELLADDLAHCQTSQGTLQIAPMLAMSDARRAAIIRRWLAGQNAPMPSRDALVRIWQEVALAREDASPCLRLGAFEIRRYQSQLWWIKSITGQSETIVLWQTWLQPLELPAGLGTVQLTAGGDIRPPRADEAVSVRFKAPGLLHIVGRNGGRKLKKIWQELGVPPWLRDTTPLLFYGETLIAAAGVFVTQEGVAEGENGVSFVWQKTLS.

20 to 25 is an ATP binding site; sequence SGGLDS.

Belongs to the tRNA(Ile)-lysidine synthase family.

Its subcellular location is the cytoplasm. The enzyme catalyses cytidine(34) in tRNA(Ile2) + L-lysine + ATP = lysidine(34) in tRNA(Ile2) + AMP + diphosphate + H(+). Ligates lysine onto the cytidine present at position 34 of the AUA codon-specific tRNA(Ile) that contains the anticodon CAU, in an ATP-dependent manner. Cytidine is converted to lysidine, thus changing the amino acid specificity of the tRNA from methionine to isoleucine. This chain is tRNA(Ile)-lysidine synthase, found in Shigella flexneri.